We begin with the raw amino-acid sequence, 181 residues long: MNGFSTEEDSRDGPPAQAAPFFGQTCCLIDGGERCPRPAGNASFSKRVQKSISQKKLKLDIDKSVRHLYICDFHKNYIQSVRNKRKRKTSDDGGDSPEHETDVPEVDLFQLQVNTLRRYKRYYKLQTRPGLNKAQLAETVSRHFRNIPVNEKETLAYFIYMVKSNRSRLDQKSESSKQLDA.

2 disulfides stabilise this stretch: cysteine 26/cysteine 27 and cysteine 35/cysteine 71. The Atypical zinc finger occupies 26–74 (CCLIDGGERCPRPAGNASFSKRVQKSISQKKLKLDIDKSVRHLYICDFH). A disordered region spans residues 82–103 (RNKRKRKTSDDGGDSPEHETDV). Positions 83–88 (NKRKRK) match the Nuclear localization signal (NLS) motif. Positions 85–87 (RKR) are important for DNA and phosphoinositide binding.

It belongs to the SAP30 family. Interacts with components of the histone deacetylase complex sin3a, hdac1 and hdac2. Binds histones and nucleosomes.

The protein localises to the nucleus. The protein resides in the nucleolus. In terms of biological role, functions as a transcription repressor, probably via its interaction with histone deacetylase complexes. Involved in the functional recruitment of the class 1 Sin3-histone deacetylase complex (HDAC) to the nucleolus. Binds DNA, apparently without sequence-specificity, and bends bound double-stranded DNA. Binds phosphoinositol phosphates (phosphoinositol 3-phosphate, phosphoinositol 4-phosphate and phosphoinositol 5-phosphate) via the same basic sequence motif that mediates DNA binding and nuclear import. The chain is Histone deacetylase complex subunit SAP30L-B (sap30l-b) from Xenopus laevis (African clawed frog).